Here is a 36-residue protein sequence, read N- to C-terminus: Photosystem II reaction center protein X (36 aa).

The chain crosses the membrane as a helical span at residues 9 to 29 (LWSIFWGGVVVALGAAALTAI).

This sequence belongs to the PsbX family. Type 1 subfamily. PSII is composed of 1 copy each of membrane proteins PsbA, PsbB, PsbC, PsbD, PsbE, PsbF, PsbH, PsbI, PsbJ, PsbK, PsbL, PsbM, PsbT, PsbX, Psb30/Ycf12, peripheral proteins PsbO, CyanoQ (PsbQ), PsbU, PsbV and a large number of cofactors. It forms dimeric complexes.

The protein localises to the cell inner membrane. Functionally, involved in the binding and/or turnover of quinones at the Q(B) site of photosystem II (PSII). PSII is a light-driven water plastoquinone oxidoreductase, using light energy to abstract electrons from H(2)O, generating a proton gradient subsequently used for ATP formation. The chain is Photosystem II reaction center protein X from Gloeobacter violaceus (strain ATCC 29082 / PCC 7421).